A 96-amino-acid chain; its full sequence is Integration host factor subunit beta (96 aa).

It belongs to the bacterial histone-like protein family. Heterodimer of an alpha and a beta chain.

In terms of biological role, this protein is one of the two subunits of integration host factor, a specific DNA-binding protein that functions in genetic recombination as well as in transcriptional and translational control. The polypeptide is Integration host factor subunit beta (Methylocella silvestris (strain DSM 15510 / CIP 108128 / LMG 27833 / NCIMB 13906 / BL2)).